The sequence spans 161 residues: Nucleotide-binding protein Daci_4781 (161 aa).

The protein belongs to the YajQ family.

In terms of biological role, nucleotide-binding protein. The protein is Nucleotide-binding protein Daci_4781 of Delftia acidovorans (strain DSM 14801 / SPH-1).